The chain runs to 408 residues: Peptidase T (408 aa).

His79 provides a ligand contact to Zn(2+). Asp81 is an active-site residue. Asp139 serves as a coordination point for Zn(2+). Glu173 (proton acceptor) is an active-site residue. Residues Glu174, Asp196, and His378 each contribute to the Zn(2+) site.

The protein belongs to the peptidase M20B family. Zn(2+) is required as a cofactor.

It is found in the cytoplasm. It catalyses the reaction Release of the N-terminal residue from a tripeptide.. Cleaves the N-terminal amino acid of tripeptides. The chain is Peptidase T from Shouchella clausii (strain KSM-K16) (Alkalihalobacillus clausii).